Reading from the N-terminus, the 48-residue chain is ATP synthase protein 8 (48 aa).

Met-1 is subject to N-formylmethionine. Residues 1 to 12 (MPQLIPFFFLNQ) are Mitochondrial intermembrane-facing. The chain crosses the membrane as a helical span at residues 13–33 (LFYGYLALFALLVLVSWVILP). Residues 34–48 (YLLQLQIVRLLITKL) lie on the Mitochondrial matrix side of the membrane.

As to quaternary structure, F-type ATP synthases have 2 components, the catalytic core F(1) and the membrane-embedded component F(0), linked together by a central stalk and a peripheral stalk. The central stalk, also called rotor shaft, is often seen as part of F(1). The peripheral stalk is seen as part of F(0). F(0) contains the membrane channel next to the rotor. F-type ATP synthases form dimers but each monomer functions independently in ATP generation. The dimer consists of 18 different polypeptides: ATP1 (subunit alpha, part of F(1), 3 molecules per monomer), ATP2 (subunit beta, part of F(1), 3 molecules per monomer), ATP3 (subunit gamma, part of the central stalk), ATP4 (subunit b, part of the peripheral stalk), ATP5/OSCP (subunit 5/OSCP, part of the peripheral stalk), ATP6 (subunit a, part of the peripheral stalk), ATP7 (subunit d, part of the peripheral stalk), ATP8 (subunit 8, part of the peripheral stalk), OLI1 (subunit c, part of the rotor, 10 molecules per monomer), ATP14 (subunit h, part of the peripheral stalk), ATP15 (subunit epsilon, part of the central stalk), ATP16 (subunit delta, part of the central stalk), ATP17 (subunit f, part of the peripheral stalk), ATP18 (subunit i/j, part of the peripheral stalk). Dimer-specific subunits are ATP19 (subunit k, at interface between monomers), ATP20 (subunit g, at interface between monomers), TIM11 (subunit e, at interface between monomers). Also contains subunit L.

The protein localises to the mitochondrion inner membrane. Mitochondrial membrane ATP synthase (F(1)F(0) ATP synthase or Complex V) produces ATP from ADP in the presence of a proton gradient across the membrane which is generated by electron transport complexes of the respiratory chain. F-type ATP synthases consist of two structural domains, F(1) - containing the extramembraneous catalytic core, and F(0) - containing the membrane proton channel, linked together by a central stalk and a peripheral stalk. During catalysis, ATP synthesis in the catalytic domain of F(1) is coupled via a rotary mechanism of the central stalk subunits to proton translocation. Part of the complex F(0) domain. Minor subunit located with subunit a/ATP6 in the membrane. The polypeptide is ATP synthase protein 8 (Pichia angusta (Yeast)).